The sequence spans 449 residues: MFS acetylaranotin efflux transporter ataA (449 aa).

7 helical membrane-spanning segments follow: residues serine 6–proline 26, tyrosine 45–isoleucine 65, tryptophan 67–proline 87, phenylalanine 115–valine 135, leucine 155–glycine 175, asparagine 182–isoleucine 202, and leucine 227–phenylalanine 247. Asparagine 252 carries N-linked (GlcNAc...) asparagine glycosylation. Helical transmembrane passes span isoleucine 260–valine 280, valine 287–phenylalanine 307, valine 321–valine 341, valine 349–alanine 369, and alanine 420–valine 440.

It belongs to the major facilitator superfamily.

It is found in the cell membrane. Functionally, efflux pump that may provide the dual role of acetylaranotin export and self-protection by allowing the fungus to evade the harmful effect of its own acetylaranotin production. The polypeptide is MFS acetylaranotin efflux transporter ataA (Aspergillus terreus (strain NIH 2624 / FGSC A1156)).